Consider the following 108-residue polypeptide: Probable 4-amino-4-deoxy-L-arabinose-phosphoundecaprenol flippase subunit ArnE (108 aa).

Transmembrane regions (helical) follow at residues 36-56 (SLWL…LVLQ), 58-78 (LDVG…TLAG), and 85-105 (PVDV…FQLG).

Belongs to the ArnE family. As to quaternary structure, heterodimer of ArnE and ArnF.

The protein localises to the cell inner membrane. It functions in the pathway bacterial outer membrane biogenesis; lipopolysaccharide biosynthesis. Functionally, translocates 4-amino-4-deoxy-L-arabinose-phosphoundecaprenol (alpha-L-Ara4N-phosphoundecaprenol) from the cytoplasmic to the periplasmic side of the inner membrane. In Pseudomonas syringae pv. syringae (strain B728a), this protein is Probable 4-amino-4-deoxy-L-arabinose-phosphoundecaprenol flippase subunit ArnE.